A 210-amino-acid polypeptide reads, in one-letter code: Probable septum site-determining protein MinC (210 aa).

This sequence belongs to the MinC family. In terms of assembly, interacts with MinD and FtsZ.

Functionally, cell division inhibitor that blocks the formation of polar Z ring septums. Rapidly oscillates between the poles of the cell to destabilize FtsZ filaments that have formed before they mature into polar Z rings. Prevents FtsZ polymerization. This chain is Probable septum site-determining protein MinC, found in Thermotoga neapolitana (strain ATCC 49049 / DSM 4359 / NBRC 107923 / NS-E).